The chain runs to 189 residues: Interferon alpha-14 (189 aa).

Residues 1–23 (MALPFALMMALVVLSCKSSCSLG) form the signal peptide. 2 cysteine pairs are disulfide-bonded: Cys-24/Cys-122 and Cys-52/Cys-162. An N-linked (GlcNAc...) asparagine glycan is attached at Asn-95.

The protein belongs to the alpha/beta interferon family.

It localises to the secreted. In terms of biological role, produced by macrophages, IFN-alpha have antiviral activities. Interferon stimulates the production of two enzymes: a protein kinase and an oligoadenylate synthetase. This Homo sapiens (Human) protein is Interferon alpha-14 (IFNA14).